The chain runs to 218 residues: Recombination protein RecR (218 aa).

The C4-type zinc finger occupies C56 to C71. Positions G79 to P195 constitute a Toprim domain.

Belongs to the RecR family.

May play a role in DNA repair. It seems to be involved in an RecBC-independent recombinational process of DNA repair. It may act with RecF and RecO. This chain is Recombination protein RecR, found in Corynebacterium efficiens (strain DSM 44549 / YS-314 / AJ 12310 / JCM 11189 / NBRC 100395).